A 318-amino-acid polypeptide reads, in one-letter code: L-lactate dehydrogenase (318 aa).

NAD(+) contacts are provided by Val15, Asp36, and Lys41. Arg89 contacts substrate. NAD(+)-binding positions include Ser102, 119–121 (ITN), and Thr144. Residue 121–124 (NPVD) participates in substrate binding. 149–152 (DSAR) serves as a coordination point for substrate. His176 serves as the catalytic Proton acceptor. Thr231 is a substrate binding site.

Belongs to the LDH/MDH superfamily. LDH family. As to quaternary structure, homotetramer.

The protein resides in the cytoplasm. The enzyme catalyses (S)-lactate + NAD(+) = pyruvate + NADH + H(+). The protein operates within fermentation; pyruvate fermentation to lactate; (S)-lactate from pyruvate: step 1/1. In terms of biological role, catalyzes the conversion of lactate to pyruvate. The polypeptide is L-lactate dehydrogenase (Fusobacterium nucleatum subsp. nucleatum (strain ATCC 25586 / DSM 15643 / BCRC 10681 / CIP 101130 / JCM 8532 / KCTC 2640 / LMG 13131 / VPI 4355)).